The sequence spans 123 residues: UPF0102 protein Fjoh_1217 (123 aa).

Belongs to the UPF0102 family.

The sequence is that of UPF0102 protein Fjoh_1217 from Flavobacterium johnsoniae (strain ATCC 17061 / DSM 2064 / JCM 8514 / BCRC 14874 / CCUG 350202 / NBRC 14942 / NCIMB 11054 / UW101) (Cytophaga johnsonae).